Consider the following 266-residue polypeptide: Respiratory nitrate reductase beta chain (266 aa).

2 4Fe-4S ferredoxin-type domains span residues 3–32 (VGMVLNLDKCIGCHTCSVTCKEGMEYAWFN) and 30–61 (WFNNVESKLCEHCLNPACVATCPSGAIYKREE). 7 residues coordinate [4Fe-4S] cluster: C12, C15, C18, C22, C39, C42, and C47. 2 residues coordinate [3Fe-4S] cluster: C51 and C73. [4Fe-4S] cluster contacts are provided by C77, C81, C84, C96, and C100.

In terms of assembly, heterotrimer composed of an alpha, a beta and a gamma chain. Alpha and beta are catalytic chains; gamma chains are involved in binding the enzyme complex to the cytoplasmic membrane. The cofactor is [4Fe-4S] cluster. Requires [3Fe-4S] cluster as cofactor.

The protein localises to the cell membrane. The protein resides in the cytoplasm. The catalysed reaction is nitrate + a quinol = a quinone + nitrite + H2O. Its activity is regulated as follows. Inhibited by micromolar concentrations of azide. The nitrate reductase enzyme complex allows Bradyrhizobium sp. USDA 3045 to use nitrate as an electron acceptor during anaerobic growth. The beta chain is an electron transfer unit containing four cysteine clusters involved in the formation of iron-sulfur centers. Electrons are transferred from the gamma chain to the molybdenum cofactor of the alpha subunit. The polypeptide is Respiratory nitrate reductase beta chain (narH) (Bradyrhizobium sp).